Here is a 3763-residue protein sequence, read N- to C-terminus: Colossin-B (3763 aa).

Positions 1–19 (MKGSIFLLFIFQIFKFSSS) are cleaved as a signal peptide. Residues Asn-43, Asn-110, Asn-258, and Asn-284 are each glycosylated (N-linked (GlcNAc...) asparagine). Positions 619–643 (DCSTLQCPSGYECKLDKNSKTRGCI) constitute a Follistatin-like 1 domain. 2 N-linked (GlcNAc...) asparagine glycosylation sites follow: Asn-652 and Asn-672. 2 consecutive Follistatin-like domains span residues 701–724 (HCRN…PRCF) and 729–752 (PCEF…AKCF). The tract at residues 792-832 (PPIFYETPSPTSAPPTETPSPTDTPTDKPTIPPTPTPTPSK) is disordered. The segment covering 810 to 820 (PSPTDTPTDKP) has biased composition (low complexity). 2 N-linked (GlcNAc...) asparagine glycosylation sites follow: Asn-845 and Asn-991. 2 disordered regions span residues 1033–1068 (LGSS…SESS) and 1095–1124 (PQPT…PTST). Gly residues predominate over residues 1036–1051 (SGSGSSGNSGSSGSGG). Low complexity-rich tracts occupy residues 1052–1068 (SSND…SESS) and 1099–1124 (PSTD…PTST). N-linked (GlcNAc...) asparagine glycosylation occurs at Asn-1054. The region spanning 1159–1227 (VSGVEITLIQ…LLNKYPIDTS (69 aa)) is the CNA-B 1 domain. N-linked (GlcNAc...) asparagine glycosylation is found at Asn-1229 and Asn-1247. The CNA-B 2 domain maps to 1304-1373 (IKGIQVTLKD…VYTMDTFQLS (70 aa)). Residue Asn-1381 is glycosylated (N-linked (GlcNAc...) asparagine). CNA-B domains lie at 1437-1515 (LPGV…IDTK), 1582-1648 (VPGI…LTLD), and 1731-1809 (VGGV…FTLS). Asn-1769 and Asn-1815 each carry an N-linked (GlcNAc...) asparagine glycan. Residues 1883-1955 (GSTVDGGTSV…SEQPPEDSME (73 aa)) are disordered. Positions 1898-1948 (STSTTTVSSSPSSSSDIGSSSDISSEVSSSLSSSPSSSEQPSEQSSSSSEQ) are enriched in low complexity. A CNA-B 6 domain is found at 2015 to 2083 (VPDVTVTLVN…DPLSGKIDFN (69 aa)). N-linked (GlcNAc...) asparagine glycosylation is found at Asn-2128, Asn-2145, Asn-2243, Asn-2294, Asn-2351, Asn-2378, Asn-2453, Asn-2493, Asn-2496, Asn-2516, Asn-2572, Asn-2601, Asn-2624, Asn-2668, Asn-2698, Asn-2714, Asn-2781, Asn-2787, Asn-2800, Asn-2838, and Asn-2858. A CNA-B 7 domain is found at 2143 to 2197 (FPNITVRLFDQNLQPVLDNFNIQVEPTVTNALGQYYFDNLHSGSYIVKFEVPTRY). In terms of domain architecture, CNA-B 8 spans 2292-2345 (VPNVTVEIFNPTGQQVYNINELLIGSTTTDSNGYYLFDEIQPGSYIIKFSNIPN). The CNA-B 9 domain maps to 2453–2477 (NTTTTDQNGLYYFDNLSPGLYKLLF). Residues 2713–2766 (VNGTIVTLLDINGNTMVDADSYPINSYTTGPDGYYKFDDFSFGKYIITFSGVPD) enclose the CNA-B 10 domain. The region spanning 2984–3061 (LGGVVVTLYN…DSNASPVDGY (78 aa)) is the CNA-B 11 domain. N-linked (GlcNAc...) asparagine glycans are attached at residues Asn-3083, Asn-3130, Asn-3372, Asn-3390, Asn-3459, Asn-3466, Asn-3557, Asn-3666, Asn-3676, and Asn-3681. A CNA-B 12 domain is found at 3128–3201 (YPNITVSIYT…TKTGVNLGII (74 aa)). Residues 3664–3733 (MANITVQLFS…NDKRDLEKIN (70 aa)) form the CNA-B 13 domain.

It belongs to the serine-aspartate repeat-containing protein (SDr) family.

Its subcellular location is the secreted. This is Colossin-B (colB) from Dictyostelium discoideum (Social amoeba).